A 1012-amino-acid chain; its full sequence is Vacuolar membrane protease (1012 aa).

Over 1–60 (MRRSTDPRNLLVRRGPLLVDGESAISELDPGFFPTGDAPKMSSTTRRRFNLIAFTPGPVT) the chain is Cytoplasmic. Residues 61–81 (VISSLVYLALLIPLLLVHTIV) form a helical membrane-spanning segment. Residues 82–432 (PSAPKSNPKG…SFAVFRLHTL (351 aa)) are Vacuolar-facing. N-linked (GlcNAc...) asparagine glycosylation is present at N159. Zn(2+)-binding residues include H215 and D227. Catalysis depends on E261, which acts as the Proton acceptor. 3 residues coordinate Zn(2+): E262, E287, and H360. Residues 433 to 453 (FAISVTLLVVCPIVLFVIGII) traverse the membrane as a helical segment. Topologically, residues 454-487 (LSKMDKMYLFSIHETIPETKEKVSVRGLRGLFRY) are cytoplasmic. A helical transmembrane segment spans residues 488–508 (PIILVVSSGILIGLSYLLAKV). The Vacuolar segment spans residues 509–518 (NPFIVHSSSY). The chain crosses the membrane as a helical span at residues 519–539 (AVWSMMLSSWIFMTWFLSCIA). The Cytoplasmic portion of the chain corresponds to 540–550 (DFFRPSALHRA). The chain crosses the membrane as a helical span at residues 551–571 (YTFTWQLLVMWVLLVISTVYV). Topologically, residues 572-575 (NQHD) are vacuolar. The helical transmembrane segment at 576-596 (IAAGYFIVFYFAGTFLATLIS) threads the bilayer. The Cytoplasmic portion of the chain corresponds to 597-710 (YLELFALPNK…WSASLPTWTW (114 aa)). A compositionally biased stretch (polar residues) spans 614–629 (SQYPSRLGSNRSSRIL). The tract at residues 614 to 660 (SQYPSRLGSNRSSRILSPSADELPTGGDNNGEIYDGEEEPTESSSLL) is disordered. The helical transmembrane segment at 711–731 (VLQFLFVGPVVIMFIGQLGLF) threads the bilayer. Residues 732–743 (LTSAMNQVGADG) are Vacuolar-facing. A helical membrane pass occupies residues 744 to 764 (VGLLVVYIAIAVFSVLLLIPL). The Cytoplasmic portion of the chain corresponds to 765–777 (SPFIHRFTYHVPT). Residues 778 to 798 (FLLLVFIATLIYNLAAFPFSA) form a helical membrane-spanning segment. Over 799-1012 (ENRLKIFFVQ…DGLVEVSRGF (214 aa)) the chain is Vacuolar. 2 N-linked (GlcNAc...) asparagine glycosylation sites follow: N842 and N878.

This sequence belongs to the peptidase M28 family. Requires Zn(2+) as cofactor.

It is found in the vacuole membrane. Its function is as follows. May be involved in vacuolar sorting and osmoregulation. The chain is Vacuolar membrane protease from Coccidioides posadasii (strain C735) (Valley fever fungus).